A 603-amino-acid chain; its full sequence is Glutathione-regulated potassium-efflux system protein KefB (603 aa).

A run of 13 helical transmembrane segments spans residues 4–24, 29–49, 55–75, 87–107, 115–135, 152–172, 177–197, 207–227, 230–250, 268–288, 291–311, 324–344, and 355–375; these read SDFL…VPLA, IGAV…GLGF, EILH…GLEL, IFGV…GLLM, AAVV…LQLM, VLLF…LLAG, HFDW…LIGG, FIAA…LVLG, LFMD…GVLL, GLLL…GVLY, LLWV…VLYL, MQFA…FSTA, and MALL…PLLM. An RCK N-terminal domain is found at 402–521; it reads KPQVIVVGFG…AGVTQFSRET (120 aa).

Belongs to the monovalent cation:proton antiporter 2 (CPA2) transporter (TC 2.A.37) family. KefB subfamily. In terms of assembly, interacts with the regulatory subunit KefG.

It is found in the cell inner membrane. Functionally, pore-forming subunit of a potassium efflux system that confers protection against electrophiles. Catalyzes K(+)/H(+) antiport. The chain is Glutathione-regulated potassium-efflux system protein KefB from Shigella boydii serotype 4 (strain Sb227).